The primary structure comprises 129 residues: Ferredoxin-1 (129 aa).

The region spanning 29-120 (SDMDLDDEDY…EVKIVYNAKH (92 aa)) is the 2Fe-2S ferredoxin-type domain. Residues C64, C69, C72, and C103 each coordinate [2Fe-2S] cluster.

It belongs to the 2Fe2S plant-type ferredoxin family. Requires [2Fe-2S] cluster as cofactor.

Its function is as follows. Ferredoxins are iron-sulfur proteins that transfer electrons in a wide variety of metabolic reactions. This Haloarcula marismortui (strain ATCC 43049 / DSM 3752 / JCM 8966 / VKM B-1809) (Halobacterium marismortui) protein is Ferredoxin-1 (fer1).